We begin with the raw amino-acid sequence, 155 residues long: Non-secretory ribonuclease (155 aa).

Residues 1–25 (MGPKLLESRLCLLLLLGLVLMLASC) form the signal peptide. A substrate-binding site is contributed by Lys33. The active-site Proton acceptor is His38. An N-linked (GlcNAc...) asparagine glycan is attached at Asn41. Cystine bridges form between Cys47–Cys106, Cys61–Cys118, Cys79–Cys133, and Cys86–Cys94. Tyr57 is subject to 3'-nitrotyrosine. 62–66 (KDINT) lines the substrate pocket. Residues Asn83, Asn88, and Asn107 are each glycosylated (N-linked (GlcNAc...) asparagine). His150 acts as the Proton donor in catalysis.

Belongs to the pancreatic ribonuclease family. Interacts with and forms a tight 1:1 complex with RNH1. Dimerization of two such complexes may occur.

It localises to the lysosome. Its subcellular location is the cytoplasmic granule. It catalyses the reaction an [RNA] containing cytidine + H2O = an [RNA]-3'-cytidine-3'-phosphate + a 5'-hydroxy-ribonucleotide-3'-[RNA].. The enzyme catalyses an [RNA] containing uridine + H2O = an [RNA]-3'-uridine-3'-phosphate + a 5'-hydroxy-ribonucleotide-3'-[RNA].. In terms of biological role, this is a non-secretory ribonuclease. It is a pyrimidine specific nuclease with a slight preference for U. Cytotoxin and helminthotoxin. Possesses a wide variety of biological activities. The polypeptide is Non-secretory ribonuclease (Rnase2) (Mus musculus (Mouse)).